A 490-amino-acid chain; its full sequence is Aspartyl/glutamyl-tRNA(Asn/Gln) amidotransferase subunit B (490 aa).

The protein belongs to the GatB/GatE family. GatB subfamily. Heterotrimer of A, B and C subunits.

The enzyme catalyses L-glutamyl-tRNA(Gln) + L-glutamine + ATP + H2O = L-glutaminyl-tRNA(Gln) + L-glutamate + ADP + phosphate + H(+). The catalysed reaction is L-aspartyl-tRNA(Asn) + L-glutamine + ATP + H2O = L-asparaginyl-tRNA(Asn) + L-glutamate + ADP + phosphate + 2 H(+). In terms of biological role, allows the formation of correctly charged Asn-tRNA(Asn) or Gln-tRNA(Gln) through the transamidation of misacylated Asp-tRNA(Asn) or Glu-tRNA(Gln) in organisms which lack either or both of asparaginyl-tRNA or glutaminyl-tRNA synthetases. The reaction takes place in the presence of glutamine and ATP through an activated phospho-Asp-tRNA(Asn) or phospho-Glu-tRNA(Gln). This is Aspartyl/glutamyl-tRNA(Asn/Gln) amidotransferase subunit B from Synechococcus sp. (strain JA-3-3Ab) (Cyanobacteria bacterium Yellowstone A-Prime).